Reading from the N-terminus, the 1362-residue chain is MTQSFTGRKRVRKVFGHIPQIAEMPNLIEVQKYSYDQFLQVDEPTGGREEQGLQAVFKSVFPISDFSESSTLEFVNYEFETPKYDVEECQQRGMTFAAPLKVTLRLIVFEVDEDTGAKSVKDIKEQDVYMGDMPLMTENGTFVINGTERVIVSQMHRSPGVFFDHDKGKTHSSGKLLFAARVIPYRGSWLDFEFDAKDIVFVRIDRRRKLPVTTLLYALGLDSEEILSTFYNSVTFTKVKQGWRVPFNADRYRGAKPERDLIDAKTGKVVVEAGRKVTPRLAKKLAEEGLKELLVQDEDIHTRYLAQEIVNMETGEIFAEAGDEITPELLEALVEAGHTDIITLDIDHVNTGAFIRNTLAVDKCTNREQALIDIYRVMRPGEPPTADTAEALFKSLFFDAERYDLSAVGRVKMNMRLDLDVSDTVRVLRKEDILAVIKTLVGLRDGKGEIDDIDNLGNRRVRSVGELMENQYRVGLLRMERAIKERMSSVDIDTVMPHDLINAKPAAAAVREFFGSSQLSQFMDQTNPLSEITHKRRLSALGPGGLTRERAGFEVRDVHPTHYGRICPIETPEGPNIGLINSLATFARVNKYGFIESPYRRVKGGKLADDIVYLSAMEESRYRIAQANVAIGKKGEIEGELVNCRIDGDFEMVPPDQVDFVDVSPKQIVSVAAALIPFLENDDANRALMGSNMQRQAVPLIRSEAPLVGTGMEEVVARDSGAAIGARRTGVVDQVDATRIVIRATEEVDSSKSGVDIYNLRKFQRSNQNTCINQRPLVRVGDQVKKGDIIADGPSTELGDLALGRNVLVAFMPWNGYNFEDSILISERIVRDDVFTSIHIEEFEVMARDTKLGPEEITRDIPNVGEEALKNLDEAGIVYIGAEVNPGDILCGKITPKGESPMTPEEKLLRAIFGEKASDVRDTSLRLPPGVQGTVVEVRVFNRHGIDKDERAMAIEREEIERLAKDRDDEFGILDRNVYGRLSEILLGKQIASGPKGMEADAKVTQANLDDLSHGQWWQIALKNEKAQSEIEALKKQYDESKERLEARFADKVDKLQRGDELPPGVMKMVKVFVAVKRKLQTGDKMAGRHGNKGVISRIVPMEDMPYLDDGQPVDIVLNPLGVPSRMNVGQILETHLGWACAGLGKKIEVALDAYHRENKPKELKDLVKQIYGDDPTVASLDEEQLVEMAGNLTNGVPIATPVFDGAREPEIVEMLELAGLDRSGQVTLHDGRTGEPFDRKVTVGYIYMLKLHHLVDDKIHARSIGPYSLVTQQPLGGKAQFGGQRFGEMEVWALEAYGAAYTLQEMLTVKSDDVAGRTKVYEAIVRGDDTFEAGIPESFNVLVKEMRSLGLNVELLTPAAN.

Belongs to the RNA polymerase beta chain family. The RNAP catalytic core consists of 2 alpha, 1 beta, 1 beta' and 1 omega subunit. When a sigma factor is associated with the core the holoenzyme is formed, which can initiate transcription.

The enzyme catalyses RNA(n) + a ribonucleoside 5'-triphosphate = RNA(n+1) + diphosphate. Functionally, DNA-dependent RNA polymerase catalyzes the transcription of DNA into RNA using the four ribonucleoside triphosphates as substrates. In Parvibaculum lavamentivorans (strain DS-1 / DSM 13023 / NCIMB 13966), this protein is DNA-directed RNA polymerase subunit beta.